A 556-amino-acid chain; its full sequence is 2-succinyl-5-enolpyruvyl-6-hydroxy-3-cyclohexene-1-carboxylate synthase (556 aa).

This sequence belongs to the TPP enzyme family. MenD subfamily. Homodimer. Mg(2+) is required as a cofactor. The cofactor is Mn(2+). Thiamine diphosphate serves as cofactor.

The catalysed reaction is isochorismate + 2-oxoglutarate + H(+) = 5-enolpyruvoyl-6-hydroxy-2-succinyl-cyclohex-3-ene-1-carboxylate + CO2. The protein operates within quinol/quinone metabolism; 1,4-dihydroxy-2-naphthoate biosynthesis; 1,4-dihydroxy-2-naphthoate from chorismate: step 2/7. It participates in quinol/quinone metabolism; menaquinone biosynthesis. In terms of biological role, catalyzes the thiamine diphosphate-dependent decarboxylation of 2-oxoglutarate and the subsequent addition of the resulting succinic semialdehyde-thiamine pyrophosphate anion to isochorismate to yield 2-succinyl-5-enolpyruvyl-6-hydroxy-3-cyclohexene-1-carboxylate (SEPHCHC). In Shigella boydii serotype 18 (strain CDC 3083-94 / BS512), this protein is 2-succinyl-5-enolpyruvyl-6-hydroxy-3-cyclohexene-1-carboxylate synthase.